We begin with the raw amino-acid sequence, 188 residues long: dTTP/UTP pyrophosphatase (188 aa).

Asp70 serves as the catalytic Proton acceptor.

This sequence belongs to the Maf family. YhdE subfamily. It depends on a divalent metal cation as a cofactor.

Its subcellular location is the cytoplasm. It carries out the reaction dTTP + H2O = dTMP + diphosphate + H(+). The enzyme catalyses UTP + H2O = UMP + diphosphate + H(+). Nucleoside triphosphate pyrophosphatase that hydrolyzes dTTP and UTP. May have a dual role in cell division arrest and in preventing the incorporation of modified nucleotides into cellular nucleic acids. This chain is dTTP/UTP pyrophosphatase, found in Clostridium beijerinckii (strain ATCC 51743 / NCIMB 8052) (Clostridium acetobutylicum).